The chain runs to 120 residues: NAD(P)H-quinone oxidoreductase subunit 3, chloroplastic (120 aa).

3 helical membrane passes run 11–31 (VVFFIVACLVPILALSGSKLI), 65–85 (FALIFVIFDVETLFLYPWAIV), and 89–109 (LGITAFLETLIFLSILIIGLV).

The protein belongs to the complex I subunit 3 family. NDH is composed of at least 16 different subunits, 5 of which are encoded in the nucleus.

It is found in the plastid. Its subcellular location is the chloroplast thylakoid membrane. The catalysed reaction is a plastoquinone + NADH + (n+1) H(+)(in) = a plastoquinol + NAD(+) + n H(+)(out). It carries out the reaction a plastoquinone + NADPH + (n+1) H(+)(in) = a plastoquinol + NADP(+) + n H(+)(out). Functionally, NDH shuttles electrons from NAD(P)H:plastoquinone, via FMN and iron-sulfur (Fe-S) centers, to quinones in the photosynthetic chain and possibly in a chloroplast respiratory chain. The immediate electron acceptor for the enzyme in this species is believed to be plastoquinone. Couples the redox reaction to proton translocation, and thus conserves the redox energy in a proton gradient. This chain is NAD(P)H-quinone oxidoreductase subunit 3, chloroplastic, found in Mesostigma viride (Green alga).